A 2193-amino-acid chain; its full sequence is Genome polyprotein (2193 aa).

Residues 1–22 (MGSQVSTQRSGSHENSNSASEG) form a disordered region. Gly2 carries N-myristoyl glycine; by host lipidation. At 2-1503 (GSQVSTQRSG…HLNRAVLIMQ (1502 aa)) the chain is on the cytoplasmic side. 2 amphipathic alpha-helix regions span residues 566-588 (GDGI…LTSL) and 568-588 (GIAD…LTSL). Residues His883 and Asp901 each act as for protease 2A activity in the active site. Residues Cys918 and Cys920 each coordinate Zn(2+). Cys972 acts as the For protease 2A activity in catalysis. Zn(2+)-binding residues include Cys978 and His980. The tract at residues 1112–1184 (SASWLKKFND…EQSAASQEDL (73 aa)) is membrane-binding. An oligomerization region spans residues 1112-1250 (SASWLKKFND…SPGTGKSLAT (139 aa)). The RNA-binding stretch occupies residues 1133–1137 (SNKIS). The region spanning 1216 to 1374 (EKRMNNYMQF…YKTDLGRLDA (159 aa)) is the SF3 helicase domain. Position 1240–1247 (1240–1247 (GSPGTGKS)) interacts with ATP. The Zn(2+) site is built by Cys1381, Cys1392, and Cys1397. Residues 1381–1397 (CSENNTANFKRCSPLVC) form a C4-type; degenerate zinc finger. Positions 1424–1431 (EYNNRYAI) are RNA-binding. Positions 1435–1440 (IEALFQ) are oligomerization. The stretch at 1504 to 1519 (SIATVVAVVSLVYVIY) is an intramembrane region. The Cytoplasmic segment spans residues 1520 to 2193 (KLFAGFQGAY…NLRRNWLELF (674 aa)). Tyr1529 carries the post-translational modification O-(5'-phospho-RNA)-tyrosine. The Peptidase C3 domain occupies 1549–1727 (GPSLDFALSL…FCAGLKRSYF (179 aa)). Residues His1588, Glu1619, and Cys1695 each act as for protease 3C activity in the active site. Positions 1958–2073 (GSLFAFDYSG…ASYPFPIDCL (116 aa)) constitute a RdRp catalytic domain. Mg(2+)-binding residues include Asp1964 and Asp2060.

Belongs to the picornaviruses polyprotein family. In terms of assembly, interacts with capsid protein VP1 and capsid protein VP3 to form heterotrimeric protomers. As to quaternary structure, interacts with capsid protein VP0, and capsid protein VP3 to form heterotrimeric protomers. Five protomers subsequently associate to form pentamers which serve as building blocks for the capsid. Interacts with capsid protein VP2, capsid protein VP3 and capsid protein VP4 following cleavage of capsid protein VP0. Interacts with capsid protein VP1 and capsid protein VP3 in the mature capsid. In terms of assembly, interacts with capsid protein VP0 and capsid protein VP1 to form heterotrimeric protomers. Five protomers subsequently associate to form pentamers which serve as building blocks for the capsid. Interacts with capsid protein VP4 in the mature capsid. Interacts with protein 2C; this interaction may be important for virion morphogenesis. As to quaternary structure, interacts with capsid protein VP1 and capsid protein VP3. Homodimer. In terms of assembly, homohexamer; forms a hexameric ring structure with 6-fold symmetry characteristic of AAA+ ATPases. Interacts (via N-terminus) with host RTN3 (via reticulon domain); this interaction is important for viral replication. Interacts with capsid protein VP3; this interaction may be important for virion morphogenesis. As to quaternary structure, interacts with protein 3CD. Homodimer. Interacts with host GBF1. Interacts (via GOLD domain) with host ACBD3 (via GOLD domain); this interaction allows the formation of a viral protein 3A/ACBD3 heterotetramer with a 2:2 stoichiometry, which will stimulate the recruitment of host PI4KB in order to synthesize PI4P at the viral RNA replication sites. In terms of assembly, interacts with RNA-directed RNA polymerase. As to quaternary structure, interacts with host IFIH1/MDA5; this interaction inhibits host IFIH1. Interacts with protein 3AB and with RNA-directed RNA polymerase. In terms of assembly, interacts with Viral protein genome-linked and with protein 3CD. It depends on Mg(2+) as a cofactor. Post-translationally, specific enzymatic cleavages in vivo by the viral proteases yield processing intermediates and the mature proteins. In terms of processing, myristoylation is required for the formation of pentamers during virus assembly. Further assembly of 12 pentamers and a molecule of genomic RNA generates the provirion. During virion maturation, immature virions are rendered infectious following cleavage of VP0 into VP4 and VP2. This maturation seems to be an autocatalytic event triggered by the presence of RNA in the capsid and it is followed by a conformational change infectious virion. Post-translationally, myristoylation is required during RNA encapsidation and formation of the mature virus particle. In terms of processing, VPg is uridylylated by the polymerase into VPg-pUpU. This acts as a nucleotide-peptide primer for the genomic RNA replication.

Its subcellular location is the virion. The protein resides in the host cytoplasm. It is found in the host cytoplasmic vesicle membrane. The protein localises to the host nucleus. The enzyme catalyses a ribonucleoside 5'-triphosphate + H2O = a ribonucleoside 5'-diphosphate + phosphate + H(+). It catalyses the reaction Selective cleavage of Tyr-|-Gly bond in the picornavirus polyprotein.. It carries out the reaction RNA(n) + a ribonucleoside 5'-triphosphate = RNA(n+1) + diphosphate. The catalysed reaction is Selective cleavage of Gln-|-Gly bond in the poliovirus polyprotein. In other picornavirus reactions Glu may be substituted for Gln, and Ser or Thr for Gly.. Its activity is regulated as follows. Replication or transcription is subject to high level of random mutations by the nucleotide analog ribavirin. In terms of biological role, forms an icosahedral capsid of pseudo T=3 symmetry with capsid proteins VP2 and VP3. The capsid is 300 Angstroms in diameter, composed of 60 copies of each capsid protein and enclosing the viral positive strand RNA genome. Capsid protein VP1 mainly forms the vertices of the capsid. Capsid protein VP1 interacts with host cell receptor to provide virion attachment to target host cells. This attachment induces virion internalization. After binding to its receptor, the capsid undergoes conformational changes. Capsid protein VP1 N-terminus (that contains an amphipathic alpha-helix) and capsid protein VP4 are externalized. Together, they shape a pore in the host membrane through which viral genome is translocated to host cell cytoplasm. Its function is as follows. Forms an icosahedral capsid of pseudo T=3 symmetry with capsid proteins VP2 and VP3. The capsid is 300 Angstroms in diameter, composed of 60 copies of each capsid protein and enclosing the viral positive strand RNA genome. Functionally, lies on the inner surface of the capsid shell. After binding to the host receptor, the capsid undergoes conformational changes. Capsid protein VP4 is released, Capsid protein VP1 N-terminus is externalized, and together, they shape a pore in the host membrane through which the viral genome is translocated into the host cell cytoplasm. Component of immature procapsids, which is cleaved into capsid proteins VP4 and VP2 after maturation. Allows the capsid to remain inactive before the maturation step. In terms of biological role, cysteine protease that cleaves viral polyprotein and specific host proteins. It is responsible for the autocatalytic cleavage between the P1 and P2 regions, which is the first cleavage occurring in the polyprotein. Also cleaves the host translation initiation factor EIF4G1, in order to shut down the capped cellular mRNA translation. Inhibits the host nucleus-cytoplasm protein and RNA trafficking by cleaving host members of the nuclear pores. Counteracts stress granule formation probably by antagonizing its assembly or promoting its dissassembly. Cleaves and inhibits host IFIH1/MDA5, thereby inhibiting the type-I IFN production and the establishment of the antiviral state. Cleaves and inhibits host MAVS, thereby inhibiting the type-I IFN production and the establishment of the antiviral state. Its function is as follows. Plays an essential role in the virus replication cycle by acting as a viroporin. Creates a pore in the host endoplasmic reticulum and as a consequence releases Ca2+ in the cytoplasm of infected cell. In turn, high levels of cytoplasmic calcium may trigger membrane trafficking and transport of viral ER-associated proteins to viroplasms, sites of viral genome replication. Functionally, induces and associates with structural rearrangements of intracellular membranes. Displays RNA-binding, nucleotide binding and NTPase activities. May play a role in virion morphogenesis and viral RNA encapsidation by interacting with the capsid protein VP3. Localizes the viral replication complex to the surface of membranous vesicles. Together with protein 3CD binds the Cis-Active RNA Element (CRE) which is involved in RNA synthesis initiation. Acts as a cofactor to stimulate the activity of 3D polymerase, maybe through a nucleid acid chaperone activity. In terms of biological role, localizes the viral replication complex to the surface of membranous vesicles. It inhibits host cell endoplasmic reticulum-to-Golgi apparatus transport and causes the disassembly of the Golgi complex, possibly through GBF1 interaction. This would result in depletion of MHC, trail receptors and IFN receptors at the host cell surface. Plays an essential role in viral RNA replication by recruiting ACBD3 and PI4KB at the viral replication sites, thereby allowing the formation of the rearranged membranous structures where viral replication takes place. Its function is as follows. Acts as a primer for viral RNA replication and remains covalently bound to viral genomic RNA. VPg is uridylylated prior to priming replication into VPg-pUpU. The oriI viral genomic sequence may act as a template for this. The VPg-pUpU is then used as primer on the genomic RNA poly(A) by the RNA-dependent RNA polymerase to replicate the viral genome. During genome replication, the VPg-RNA linkage is removed by the host TDP2, thereby accelerating replication. During the late stage of the replication cycle, host TDP2 is excluded from sites of viral RNA synthesis and encapsidation, allowing for the generation of progeny virions. Functionally, involved in the viral replication complex and viral polypeptide maturation. It exhibits protease activity with a specificity and catalytic efficiency that is different from protease 3C. Protein 3CD lacks polymerase activity. Protein 3CD binds to the 5'UTR of the viral genome. Major viral protease that mediates proteolytic processing of the polyprotein. Cleaves host EIF5B, contributing to host translation shutoff. Also cleaves host PABPC1, contributing to host translation shutoff. Binds and inhibits host IFIH1/MDA5, thereby inhibiting the type-I IFN production and the establishment of the antiviral state. Cleaves host MAP3K7/TAK1, resulting in inhibition of TRAF6-triggered NF-kappa-B induction. Cleaves host NLRP1, triggers host N-glycine-mediated degradation of the autoinhibitory NLRP1 N-terminal fragment. In terms of biological role, replicates the viral genomic RNA on the surface of intracellular membranes. May form linear arrays of subunits that propagate along a strong head-to-tail interaction called interface-I. Covalently attaches UMP to a tyrosine of VPg, which is used to prime RNA synthesis. The positive stranded RNA genome is first replicated at virus induced membranous vesicles, creating a dsRNA genomic replication form. This dsRNA is then used as template to synthesize positive stranded RNA genomes. ss(+)RNA genomes are either translated, replicated or encapsidated. In Homo sapiens (Human), this protein is Genome polyprotein.